The primary structure comprises 59 residues: Light-harvesting protein B-800-850 alpha chain E (59 aa).

At 1 to 11 the chain is on the cytoplasmic side; it reads MNQGRIWTVVK. Residues 12 to 35 traverse the membrane as a helical segment; that stretch reads PTVGLPLLLGSVTVIAILVHFAVL. His31 is an a bacteriochlorophyll binding site. Residues 36–59 are Periplasmic-facing; the sequence is SNTTWFSKYWNGKAAAIESSVSIG.

It belongs to the antenna complex alpha subunit family. In terms of assembly, the core complex is formed by different alpha and beta chains, binding bacteriochlorophyll molecules, and arranged most probably in tetrameric structures disposed around the reaction center. The non-pigmented gamma chains may constitute additional components.

Its subcellular location is the cell inner membrane. Antenna complexes are light-harvesting systems, which transfer the excitation energy to the reaction centers. This chain is Light-harvesting protein B-800-850 alpha chain E (pucAE), found in Rhodopseudomonas palustris (strain ATCC BAA-98 / CGA009).